Reading from the N-terminus, the 759-residue chain is Forkhead box protein M1 (759 aa).

The tract at residues methionine 1–serine 92 is disordered. The segment covering leucine 48–glutamine 63 has biased composition (basic and acidic residues). The fork-head DNA-binding region spans arginine 260 to aspartate 358. 3 disordered regions span residues alanine 420 to glycine 450, serine 516 to valine 535, and lysine 596 to valine 631. The segment covering lysine 601 to threonine 612 has biased composition (low complexity).

As to expression, localized to the animal hemisphere of early cleavage stage embryos. During neurulation, expressed in the neural folds. Later, expressed in the spinal cord and in the eye field. During tailbud stages, expression is still restricted to the neuroectoderm, predominantly to the hindbrain, the eye and the spinal cord. With ongoing development, expression is also found at lower levels in the branchial arches. At stage 35, expressed in the rhombencephalon and in the eye retina.

The protein localises to the nucleus. In terms of biological role, transcription factor regulating the expression of cell cycle genes essential for DNA replication and mitosis. Plays a role in the control of cell proliferation. Also plays a role in DNA break repair, participating in the DNA damage checkpoint response. Promotes transcription of PHB2. The polypeptide is Forkhead box protein M1 (Xenopus laevis (African clawed frog)).